Consider the following 253-residue polypeptide: Polyhedrin (253 aa).

Its function is as follows. Major component of the virus occlusion bodies, which are large proteinaceous structures (polyhedra), that protect the virus from the outside environment for extended periods until they are ingested by insect larvae. The sequence is that of Polyhedrin from Orgyia pseudotsugata cypovirus (OpCPV).